A 1439-amino-acid chain; its full sequence is Histone-lysine N-methyltransferase NSD3 (1439 aa).

A disordered region spans residues 121–151; it reads PHEILEKPSPPQPPPPPSVPQTVIPKKTGSP. The segment covering 128-139 has biased composition (pro residues); the sequence is PSPPQPPPPPSV. Residue Ser-150 is modified to Phosphoserine. A KIKL motif is present at residues 154–157; the sequence is KLKI. The segment at 181 to 247 is disordered; it reads QASEHTKSKH…PREEPVLKEA (67 aa). Positions 187-201 are enriched in basic residues; the sequence is KSKHESRKEKRKKSN. The segment covering 202 to 244 has biased composition (basic and acidic residues); the sequence is RHESSRSEERRSHKIPKLEPEGQNRPNERVDTAPEKPREEPVL. Residues Lys-218 and Lys-245 each participate in a glycyl lysine isopeptide (Lys-Gly) (interchain with G-Cter in SUMO2) cross-link. Residues 270-333 enclose the PWWP 1 domain; sequence VGDLVWSKVG…EKRVREYKGH (64 aa). Disordered regions lie at residues 344–367 and 401–466; these read AKQA…ERAQ and EASS…PPPV. Polar residues-rich tracts occupy residues 401–413 and 425–445; these read EASS…VTSK and VLNS…QSST. Lys-413 is covalently cross-linked (Glycyl lysine isopeptide (Lys-Gly) (interchain with G-Cter in SUMO2)). Ser-457 bears the Phosphoserine mark. Residues Lys-502 and Lys-532 each participate in a glycyl lysine isopeptide (Lys-Gly) (interchain with G-Cter in SUMO2) cross-link. The interval 540–695 is disordered; the sequence is QDRLIISSPS…VDSSLSRRGV (156 aa). The span at 546–568 shows a compositional bias: polar residues; the sequence is SSPSQRSEKPAQSASSPEATSGS. Positions 583–595 are enriched in basic and acidic residues; sequence TRSESEKSAEVVP. 3 positions are modified to phosphoserine: Ser-585, Ser-587, and Ser-590. Lys-628 is covalently cross-linked (Glycyl lysine isopeptide (Lys-Gly) (interchain with G-Cter in SUMO2)). Over residues 637-648 the composition is skewed to polar residues; the sequence is STDVETASCTYR. Ser-655 is subject to Phosphoserine. The span at 670–691 shows a compositional bias: low complexity; it reads DSPSATADADASDAQSVDSSLS. 3 consecutive PHD-type zinc fingers follow at residues 701–748, 749–805, and 862–955; these read DTVC…CETG, QHPC…CSME, and VGFC…CKAG. N6-acetyllysine is present on Lys-790. Positions 960 to 1025 constitute a PWWP 2 domain; it reads YKQIVWVKLG…QGRVFPYVEG (66 aa). Residues 1036 to 1065 adopt a coiled-coil conformation; it reads INKTFKKALEEAAKRFQELKAQRESKEALE. Residues 1096–1146 enclose the AWS domain; it reads SEIPRCNCKPGDENPCGLESQCLNRMSQYECHPQVCPAGDRCQNQCFTKRL. The SET domain occupies 1148-1265; sequence PDAEVIKTER…AGMELTFNYN (118 aa). Lys-1154 is covalently cross-linked (Glycyl lysine isopeptide (Lys-Gly) (interchain with G-Cter in SUMO2)). Residues 1272 to 1288 form the Post-SET domain; the sequence is GRTVCHCGADNCSGFLG. The PHD-type 4; atypical zinc finger occupies 1323 to 1370; it reads EDYCFQCGDGGELVMCDKKDCPKAYHLLCLNLTQPPHGKWECPWHRCD.

It belongs to the class V-like SAM-binding methyltransferase superfamily. Histone-lysine methyltransferase family. SET2 subfamily. As to quaternary structure, interacts with BRD4. Interacts (via KIKL motif) with BRD3 (via NET domain).

Its subcellular location is the nucleus. The protein resides in the chromosome. It catalyses the reaction L-lysyl(4)-[histone H3] + 2 S-adenosyl-L-methionine = N(6),N(6)-dimethyl-L-lysyl(4)-[histone H3] + 2 S-adenosyl-L-homocysteine + 2 H(+). The catalysed reaction is L-lysyl(27)-[histone H3] + 2 S-adenosyl-L-methionine = N(6),N(6)-dimethyl-L-lysyl(27)-[histone H3] + 2 S-adenosyl-L-homocysteine + 2 H(+). In terms of biological role, histone methyltransferase. Preferentially dimethylates 'Lys-4' and 'Lys-27' of histone H3 forming H3K4me2 and H3K27me2. H3 'Lys-4' methylation represents a specific tag for epigenetic transcriptional activation, while 'Lys-27' is a mark for transcriptional repression. The chain is Histone-lysine N-methyltransferase NSD3 (Nsd3) from Mus musculus (Mouse).